A 103-amino-acid polypeptide reads, in one-letter code: Large ribosomal subunit protein bL21 (103 aa).

The protein belongs to the bacterial ribosomal protein bL21 family. In terms of assembly, part of the 50S ribosomal subunit. Contacts protein L20.

Its function is as follows. This protein binds to 23S rRNA in the presence of protein L20. This is Large ribosomal subunit protein bL21 from Wolinella succinogenes (strain ATCC 29543 / DSM 1740 / CCUG 13145 / JCM 31913 / LMG 7466 / NCTC 11488 / FDC 602W) (Vibrio succinogenes).